The sequence spans 68 residues: uncharacterized protein (68 aa).

This is an uncharacterized protein from Rickettsia prowazekii (strain Madrid E).